Consider the following 116-residue polypeptide: MANEVRVARLESLIKDVINNALANEINDKIAKLARVTAVRLSNDLSVAKIFLDAHKRESMPKVLENVNKVSGLLRSKLAAEWTSYKVPELRFVIDETIDYANHIDELFKKIKQQEN.

It belongs to the RbfA family. Monomer. Binds 30S ribosomal subunits, but not 50S ribosomal subunits or 70S ribosomes.

It localises to the cytoplasm. Its function is as follows. One of several proteins that assist in the late maturation steps of the functional core of the 30S ribosomal subunit. Associates with free 30S ribosomal subunits (but not with 30S subunits that are part of 70S ribosomes or polysomes). Required for efficient processing of 16S rRNA. May interact with the 5'-terminal helix region of 16S rRNA. In Ureaplasma urealyticum serovar 10 (strain ATCC 33699 / Western), this protein is Ribosome-binding factor A.